We begin with the raw amino-acid sequence, 219 residues long: Ribose-5-phosphate isomerase A (219 aa).

Substrate-binding positions include 28–31 (TGST), 81–84 (DGAD), and 94–97 (KGGG). Glu-103 serves as the catalytic Proton acceptor. Residue Lys-121 participates in substrate binding.

This sequence belongs to the ribose 5-phosphate isomerase family. As to quaternary structure, homodimer.

The catalysed reaction is aldehydo-D-ribose 5-phosphate = D-ribulose 5-phosphate. It participates in carbohydrate degradation; pentose phosphate pathway; D-ribose 5-phosphate from D-ribulose 5-phosphate (non-oxidative stage): step 1/1. Functionally, catalyzes the reversible conversion of ribose-5-phosphate to ribulose 5-phosphate. The protein is Ribose-5-phosphate isomerase A of Salmonella arizonae (strain ATCC BAA-731 / CDC346-86 / RSK2980).